The chain runs to 437 residues: Adenosylhomocysteinase (437 aa).

Substrate is bound by residues T54, D130, and E155. T156–T158 is a binding site for NAD(+). Residues K185 and D189 each coordinate substrate. Residues N190, G219–G224, E242, N277, I298–H300, and N345 each bind NAD(+).

It belongs to the adenosylhomocysteinase family. In terms of assembly, homotetramer. NAD(+) is required as a cofactor.

It localises to the cytoplasm. It catalyses the reaction S-adenosyl-L-homocysteine + H2O = L-homocysteine + adenosine. Its pathway is amino-acid biosynthesis; L-homocysteine biosynthesis; L-homocysteine from S-adenosyl-L-homocysteine: step 1/1. Functionally, adenosylhomocysteine is a competitive inhibitor of S-adenosyl-L-methionine-dependent methyl transferase reactions; therefore adenosylhomocysteinase may play a key role in the control of methylations via regulation of the intracellular concentration of adenosylhomocysteine. This is Adenosylhomocysteinase from Leishmania donovani.